Here is a 412-residue protein sequence, read N- to C-terminus: Indian hedgehog B protein (412 aa).

An N-terminal signal peptide occupies residues 1 to 23; it reads MRLSTAAALLTGFILAFSPAYDG. Residue Cys-24 is the site of N-palmitoyl cysteine attachment. Ca(2+) contacts are provided by Glu-89, Glu-90, Asp-95, Thr-125, Glu-126, Asp-129, and Asp-131. Residues His-140, Asp-147, and His-182 each contribute to the Zn(2+) site. The Cholesterol glycine ester moiety is linked to residue Gly-197.

It belongs to the hedgehog family. As to quaternary structure, multimer. In terms of assembly, interacts with BOC and CDON. Interacts with PTCH1. Interacts with glypican GPC3. Cholesterylation is required for N-product targeting to lipid rafts and multimerization. In terms of processing, the C-terminal domain displays an autoproteolysis activity and a cholesterol transferase activity. Both activities result in the cleavage of the full-length protein and covalent attachment of a cholesterol moiety to the C-terminal of the newly generated N-product. The N-product is the active species in both local and long-range signaling, whereas the C-product is degraded in the endoplasmic reticulum. Post-translationally, N-palmitoylation by HHAT of N-product is required for indian hedgehog protein N-product multimerization and full activity. Expressed exclusively in the notochord.

The protein resides in the cell membrane. Its subcellular location is the endoplasmic reticulum membrane. The protein localises to the golgi apparatus membrane. It is found in the secreted. The catalysed reaction is glycyl-L-cysteinyl-[protein] + cholesterol + H(+) = [protein]-C-terminal glycyl cholesterol ester + N-terminal L-cysteinyl-[protein]. Functionally, signal involved in the early induction and patterning of anterodorsal ectoderm, nervous system and somites. It is involved in the regulation of endochondral skeleton formation, and the development of retinal pigment epithelium (RPE), photoreceptors and periocular tissues. Its function is as follows. The C-terminal part of the indian hedgehog protein precursor displays an autoproteolysis and a cholesterol transferase activity. Both activities result in the cleavage of the full-length protein into two parts followed by the covalent attachment of a cholesterol moiety to the C-terminal of the newly generated N-product. Both activities occur in the endoplasmic reticulum. In terms of biological role, the dually lipidated indian hedgehog protein N-product is a morphogen which is essential for a variety of patterning events during development. Binds to the patched (PTCH1) receptor, which functions in association with smoothened (SMO), to activate the transcription of target genes. In the notochord, induces somite patterning and muscle pioneer differentiation. The protein is Indian hedgehog B protein (ihhb) of Danio rerio (Zebrafish).